Consider the following 182-residue polypeptide: Protein Syd (182 aa).

Belongs to the Syd family.

The protein resides in the cell inner membrane. Its function is as follows. Interacts with the SecY protein in vivo. May bind preferentially to an uncomplexed state of SecY, thus functioning either as a chelating agent for excess SecY in the cell or as a regulatory factor that negatively controls the translocase function. This is Protein Syd from Pectobacterium carotovorum subsp. carotovorum (strain PC1).